The chain runs to 147 residues: Siroheme decarboxylase NirG subunit (147 aa).

The protein belongs to the Ahb/Nir family. As to quaternary structure, probably forms a complex composed of NirD, NirL, NirG and NirH. All proteins are required for the total conversion of siroheme to didecarboxysiroheme.

The enzyme catalyses siroheme + 2 H(+) = 12,18-didecarboxysiroheme + 2 CO2. The protein operates within porphyrin-containing compound metabolism. In terms of biological role, involved in heme d1 biosynthesis. Catalyzes the decarboxylation of siroheme into didecarboxysiroheme. The polypeptide is Siroheme decarboxylase NirG subunit (Pseudomonas aeruginosa (strain ATCC 15692 / DSM 22644 / CIP 104116 / JCM 14847 / LMG 12228 / 1C / PRS 101 / PAO1)).